The chain runs to 242 residues: Type III pantothenate kinase (242 aa).

7-14 (DLGNSRFK) is a binding site for ATP. Residues Tyr91 and 98–101 (GVDR) contribute to the substrate site. Catalysis depends on Asp100, which acts as the Proton acceptor. Thr121 is an ATP binding site. Thr171 lines the substrate pocket.

Belongs to the type III pantothenate kinase family. As to quaternary structure, homodimer. The cofactor is NH4(+). K(+) is required as a cofactor.

The protein localises to the cytoplasm. The catalysed reaction is (R)-pantothenate + ATP = (R)-4'-phosphopantothenate + ADP + H(+). It functions in the pathway cofactor biosynthesis; coenzyme A biosynthesis; CoA from (R)-pantothenate: step 1/5. In terms of biological role, catalyzes the phosphorylation of pantothenate (Pan), the first step in CoA biosynthesis. This Xanthomonas oryzae pv. oryzae (strain MAFF 311018) protein is Type III pantothenate kinase.